The primary structure comprises 117 residues: UPF0102 protein RSKD131_0118 (117 aa).

The protein belongs to the UPF0102 family.

This chain is UPF0102 protein RSKD131_0118, found in Cereibacter sphaeroides (strain KD131 / KCTC 12085) (Rhodobacter sphaeroides).